Reading from the N-terminus, the 409-residue chain is Wadjet protein JetD (409 aa).

Component of antiplasmid transformation system Wadjet type I, composed of JetA, JetB, JetC and JetD. Expression of Wadjet type I in B.subtilis (strain BEST7003) reduces the transformation efficiency of plasmid pHCMC05. The protein is Wadjet protein JetD of Bacillus cereus (strain Q1).